The primary structure comprises 428 residues: Gamma-glutamyl phosphate reductase (428 aa).

It belongs to the gamma-glutamyl phosphate reductase family.

Its subcellular location is the cytoplasm. It carries out the reaction L-glutamate 5-semialdehyde + phosphate + NADP(+) = L-glutamyl 5-phosphate + NADPH + H(+). It functions in the pathway amino-acid biosynthesis; L-proline biosynthesis; L-glutamate 5-semialdehyde from L-glutamate: step 2/2. Catalyzes the NADPH-dependent reduction of L-glutamate 5-phosphate into L-glutamate 5-semialdehyde and phosphate. The product spontaneously undergoes cyclization to form 1-pyrroline-5-carboxylate. The polypeptide is Gamma-glutamyl phosphate reductase (Afipia carboxidovorans (strain ATCC 49405 / DSM 1227 / KCTC 32145 / OM5) (Oligotropha carboxidovorans)).